The following is a 257-amino-acid chain: Deoxyribose-phosphate aldolase (257 aa).

Aspartate 102 serves as the catalytic Proton donor/acceptor. The active-site Schiff-base intermediate with acetaldehyde is the lysine 166. Lysine 198 serves as the catalytic Proton donor/acceptor.

The protein belongs to the DeoC/FbaB aldolase family. DeoC type 2 subfamily.

It is found in the cytoplasm. The catalysed reaction is 2-deoxy-D-ribose 5-phosphate = D-glyceraldehyde 3-phosphate + acetaldehyde. The protein operates within carbohydrate degradation; 2-deoxy-D-ribose 1-phosphate degradation; D-glyceraldehyde 3-phosphate and acetaldehyde from 2-deoxy-alpha-D-ribose 1-phosphate: step 2/2. Its function is as follows. Catalyzes a reversible aldol reaction between acetaldehyde and D-glyceraldehyde 3-phosphate to generate 2-deoxy-D-ribose 5-phosphate. The sequence is that of Deoxyribose-phosphate aldolase from Aeromonas hydrophila subsp. hydrophila (strain ATCC 7966 / DSM 30187 / BCRC 13018 / CCUG 14551 / JCM 1027 / KCTC 2358 / NCIMB 9240 / NCTC 8049).